Here is a 910-residue protein sequence, read N- to C-terminus: DNA mismatch repair protein MutS (910 aa).

Position 658-665 (658-665) interacts with ATP; the sequence is GPNMGGKS.

It belongs to the DNA mismatch repair MutS family.

In terms of biological role, this protein is involved in the repair of mismatches in DNA. It is possible that it carries out the mismatch recognition step. This protein has a weak ATPase activity. The polypeptide is DNA mismatch repair protein MutS (Brucella anthropi (strain ATCC 49188 / DSM 6882 / CCUG 24695 / JCM 21032 / LMG 3331 / NBRC 15819 / NCTC 12168 / Alc 37) (Ochrobactrum anthropi)).